Consider the following 285-residue polypeptide: Pantothenate synthetase (285 aa).

ATP is bound at residue 30–37 (MGFLHEGH). The active-site Proton donor is histidine 37. Residue glutamine 61 coordinates (R)-pantoate. Glutamine 61 is a beta-alanine binding site. Residue 147–150 (GQKD) participates in ATP binding. (R)-pantoate is bound at residue glutamine 153. ATP is bound by residues valine 176 and 184–187 (KSSR).

Belongs to the pantothenate synthetase family. As to quaternary structure, homodimer.

The protein resides in the cytoplasm. It catalyses the reaction (R)-pantoate + beta-alanine + ATP = (R)-pantothenate + AMP + diphosphate + H(+). It functions in the pathway cofactor biosynthesis; (R)-pantothenate biosynthesis; (R)-pantothenate from (R)-pantoate and beta-alanine: step 1/1. Its function is as follows. Catalyzes the condensation of pantoate with beta-alanine in an ATP-dependent reaction via a pantoyl-adenylate intermediate. The chain is Pantothenate synthetase from Listeria innocua serovar 6a (strain ATCC BAA-680 / CLIP 11262).